The chain runs to 412 residues: Gamma-glutamyl phosphate reductase (412 aa).

The protein belongs to the gamma-glutamyl phosphate reductase family.

It localises to the cytoplasm. It catalyses the reaction L-glutamate 5-semialdehyde + phosphate + NADP(+) = L-glutamyl 5-phosphate + NADPH + H(+). It participates in amino-acid biosynthesis; L-proline biosynthesis; L-glutamate 5-semialdehyde from L-glutamate: step 2/2. In terms of biological role, catalyzes the NADPH-dependent reduction of L-glutamate 5-phosphate into L-glutamate 5-semialdehyde and phosphate. The product spontaneously undergoes cyclization to form 1-pyrroline-5-carboxylate. In Lactiplantibacillus plantarum (strain ATCC BAA-793 / NCIMB 8826 / WCFS1) (Lactobacillus plantarum), this protein is Gamma-glutamyl phosphate reductase.